The sequence spans 245 residues: Ribonuclease PH (245 aa).

Residues Arg-86 and 124-126 (GTR) each bind phosphate.

It belongs to the RNase PH family. Homohexameric ring arranged as a trimer of dimers.

The enzyme catalyses tRNA(n+1) + phosphate = tRNA(n) + a ribonucleoside 5'-diphosphate. Its function is as follows. Phosphorolytic 3'-5' exoribonuclease that plays an important role in tRNA 3'-end maturation. Removes nucleotide residues following the 3'-CCA terminus of tRNAs; can also add nucleotides to the ends of RNA molecules by using nucleoside diphosphates as substrates, but this may not be physiologically important. Probably plays a role in initiation of 16S rRNA degradation (leading to ribosome degradation) during starvation. This is Ribonuclease PH from Bacillus velezensis (strain DSM 23117 / BGSC 10A6 / LMG 26770 / FZB42) (Bacillus amyloliquefaciens subsp. plantarum).